The chain runs to 452 residues: Phosphatidylserine synthase 2 (452 aa).

Topologically, residues 1-35 (MAKGEWKRSGADDLPLPGRSECEVFDDGTNTFFWR) are cytoplasmic. The helical transmembrane segment at 36–56 (AHTVTVLFILTCALVYVTLLE) threads the bilayer. Topologically, residues 57–69 (ETPHDTAYNTKRG) are lumenal. A helical membrane pass occupies residues 70 to 90 (IVASILVFLCFGVTQAKDGPF). Topologically, residues 91 to 99 (TRPHPAYWR) are cytoplasmic. The chain crosses the membrane as a helical span at residues 100–120 (FWLCVSVVYELFLIFILFQTV). The Lumenal portion of the chain corresponds to 121 to 286 (HDGRQFMKYI…EWRPASNLRR (166 aa)). The helical transmembrane segment at 287–307 (WLAVLGIIFMFLLAELNTFYL) threads the bilayer. Position 308 (lysine 308) is a topological domain, cytoplasmic. A helical membrane pass occupies residues 309-329 (FVMWMPPEHYLVLFRLVFFVN). Over 330–349 (VGGVAMREIYDFMDDPKFHK) the chain is Lumenal. A helical membrane pass occupies residues 350–370 (KLGQQAWIVAAITVTEFLIVV). The Cytoplasmic portion of the chain corresponds to 371–376 (KYDPNT). The chain crosses the membrane as a helical span at residues 377-397 (IMLPIPFFITQCWILGIALIL). At 398–452 (VWTLWRFFIRDITLRYKETRRRRQEVSSERDGSSSAPSGRSKLNGSMDSVRHRKS) the chain is on the lumenal side. Positions 419 to 452 (RRQEVSSERDGSSSAPSGRSKLNGSMDSVRHRKS) are disordered. Residues 430–444 (SSSAPSGRSKLNGSM) show a composition bias toward polar residues.

The protein belongs to the phosphatidyl serine synthase family.

The protein resides in the endoplasmic reticulum membrane. It catalyses the reaction a 1,2-diacyl-sn-glycero-3-phosphoethanolamine + L-serine = a 1,2-diacyl-sn-glycero-3-phospho-L-serine + ethanolamine. It carries out the reaction 1-hexadecanoyl-2-(9Z-octadecenoyl)-sn-glycero-3-phosphoethanolamine + L-serine = 1-hexadecanoyl-2-(9Z-octadecenoyl)-sn-glycero-3-phospho-L-serine + ethanolamine. The enzyme catalyses 1-hexadecanoyl-2-(4Z,7Z,10Z,13Z,16Z,19Z-docosahexaenoyl)-sn-glycero-3-phosphoethanolamine + L-serine = 1-hexadecanoyl-2-(4Z,7Z,10Z,13Z,16Z,19Z-docosahexaenoyl)-sn-glycero-3-phosphoserine + ethanolamine. The catalysed reaction is 1-octadecanoyl-2-(5Z,8Z,11Z,14Z)-eicosatetraenoyl-sn-glycero-3-phosphoethanolamine + L-serine = 1-octadecanoyl-2-(5Z,8Z,11Z,14Z)-eicosatetraenoyl-sn-glycero-3-phosphoserine + ethanolamine. It catalyses the reaction 1-octadecanoyl-2-(4Z,7Z,10Z,13Z,16Z,19Z-docosahexaenoyl)-sn-glycero-3-phosphoethanolamine + L-serine = 1-octadecanoyl-2-(4Z,7Z,10Z,13Z,16Z,19Z-docosahexaenoyl)-sn-glycero-3-phosphoserine + ethanolamine. It carries out the reaction 1-(1Z-octadecenyl)-2-(4Z,7Z,10Z,13Z,16Z,19Z-docosahexaenoyl)-sn-glycero-3-phosphoethanolamine + L-serine = 1-(1Z-octadecenyl)-2-(4Z,7Z,10Z,13Z,16Z,19Z-docosahexaenoyl)-sn-glycero-3-phospho-L-serine + ethanolamine. The enzyme catalyses 1-octadecanoyl-2-(9Z-octadecenoyl)-sn-glycero-3-phosphoethanolamine + L-serine = 1-octadecanoyl-2-(9Z-octadecenoyl)-sn-glycero-3-phospho-L-serine + ethanolamine. The catalysed reaction is 1-(1Z-octadecenyl)-2-(9Z-octadecenoyl)-sn-glycero-3-phosphoethanolamine + L-serine = 1-(1Z-octadecenyl)-2-(9Z-octadecenoyl)-sn-glycero-3-phospho-L-serine + ethanolamine. It catalyses the reaction 1-(1Z-octadecenyl)-2-(5Z,8Z,11Z,14Z- eicosatetraenoyl)-sn-glycero-3-phosphoethanolamine + L-serine = 1-(1Z-octadecenyl)-2-(5Z,8Z,11Z,14Z-eicosatetraenoyl)-sn-glycero-3-phospho-L-serine + ethanolamine. It participates in phospholipid metabolism; phosphatidylserine biosynthesis. Catalyzes a base-exchange reaction in which the polar head group of phosphatidylethanolamine (PE) or phosphatidylcholine (PC) is replaced by L-serine. Catalyzes the conversion of phosphatatidylethanolamine and does not act on phosphatidylcholine. Can utilize both phosphatidylethanolamine (PE) plasmalogen and diacyl PE as substrate and the latter is six times better utilized, indicating the importance of an ester linkage at the sn-1 position. Although it shows no sn-1 fatty acyl preference, exhibits significant preference towards docosahexaenoic acid (22:6n-3) compared with 18:1 or 20:4 at the sn-2 position. The protein is Phosphatidylserine synthase 2 (ptdss2) of Danio rerio (Zebrafish).